Here is a 317-residue protein sequence, read N- to C-terminus: Beta-ketoacyl-[acyl-carrier-protein] synthase III (317 aa).

Active-site residues include cysteine 112 and histidine 244. Residues 245–249 (QANIR) form an ACP-binding region. Residue asparagine 274 is part of the active site.

This sequence belongs to the thiolase-like superfamily. FabH family. As to quaternary structure, homodimer.

It localises to the cytoplasm. The catalysed reaction is malonyl-[ACP] + acetyl-CoA + H(+) = 3-oxobutanoyl-[ACP] + CO2 + CoA. Its pathway is lipid metabolism; fatty acid biosynthesis. Catalyzes the condensation reaction of fatty acid synthesis by the addition to an acyl acceptor of two carbons from malonyl-ACP. Catalyzes the first condensation reaction which initiates fatty acid synthesis and may therefore play a role in governing the total rate of fatty acid production. Possesses both acetoacetyl-ACP synthase and acetyl transacylase activities. Its substrate specificity determines the biosynthesis of branched-chain and/or straight-chain of fatty acids. The protein is Beta-ketoacyl-[acyl-carrier-protein] synthase III of Rickettsia akari (strain Hartford).